The primary structure comprises 173 residues: Photosystem I assembly protein Ycf3 (173 aa).

TPR repeat units follow at residues 35-68 (AYVY…EENP), 72-105 (GETL…NPKQ), and 120-153 (GRTA…NPGG).

This sequence belongs to the Ycf3 family.

The protein localises to the cellular thylakoid membrane. Its function is as follows. Essential for the assembly of the photosystem I (PSI) complex. May act as a chaperone-like factor to guide the assembly of the PSI subunits. The chain is Photosystem I assembly protein Ycf3 from Synechococcus sp. (strain WH7803).